The primary structure comprises 332 residues: Glycerol-3-phosphate dehydrogenase [NAD(P)+] (332 aa).

3 residues coordinate NADPH: Trp-13, Arg-33, and Lys-107. 3 residues coordinate sn-glycerol 3-phosphate: Lys-107, Gly-136, and Ser-138. Residue Ala-140 participates in NADPH binding. Positions 191, 244, 254, 255, and 256 each coordinate sn-glycerol 3-phosphate. Residue Lys-191 is the Proton acceptor of the active site. Arg-255 lines the NADPH pocket. Glu-280 is a binding site for NADPH.

It belongs to the NAD-dependent glycerol-3-phosphate dehydrogenase family.

Its subcellular location is the cytoplasm. It catalyses the reaction sn-glycerol 3-phosphate + NAD(+) = dihydroxyacetone phosphate + NADH + H(+). The catalysed reaction is sn-glycerol 3-phosphate + NADP(+) = dihydroxyacetone phosphate + NADPH + H(+). The protein operates within membrane lipid metabolism; glycerophospholipid metabolism. Its function is as follows. Catalyzes the reduction of the glycolytic intermediate dihydroxyacetone phosphate (DHAP) to sn-glycerol 3-phosphate (G3P), the key precursor for phospholipid synthesis. In Alkalilimnicola ehrlichii (strain ATCC BAA-1101 / DSM 17681 / MLHE-1), this protein is Glycerol-3-phosphate dehydrogenase [NAD(P)+].